We begin with the raw amino-acid sequence, 149 residues long: UPF0208 membrane protein PBPRA2797 (149 aa).

Helical transmembrane passes span 41–60 (FATR…QMAF) and 65–87 (ALPQ…LWWL).

Belongs to the UPF0208 family.

It localises to the cell inner membrane. The polypeptide is UPF0208 membrane protein PBPRA2797 (Photobacterium profundum (strain SS9)).